The primary structure comprises 219 residues: HTH-type transcriptional activator FasR (219 aa).

Residues 1 to 30 (MSDLANTAERRGEKRPAGGNRRGNRLPRDE) form a disordered region. Residues 29–89 (DERRGQLLIA…AVLQRHVDNL (61 aa)) form the HTH tetR-type domain. The H-T-H motif DNA-binding region spans 52–71 (GMDEIADRAGVSKPVLYQHF).

In terms of assembly, homodimer.

Its activity is regulated as follows. FasR:DNA binding is regulated by long-chain acyl-CoAs (C14- to C26-CoA), which act as effector molecules that modulate the affinity of FasR for its DNA binding sequences and therefore modulate the expression of the essential fas-acpS operon. Its function is as follows. Transcriptional activator that plays a central role in sensing mycobacterial long-chain fatty acids and regulating lipid biosynthesis. Activates the expression of the genes encoding the fatty acid synthase (fas) and the 4-phosphopantetheinyl transferase (acpS), whose products are involved in the fatty acid and mycolic acid biosynthesis. Specifically binds to three conserved operator sequences present in the fas-acpS promoter region. Essential for M.smegmatis viability. The protein is HTH-type transcriptional activator FasR of Mycolicibacterium smegmatis (strain ATCC 700084 / mc(2)155) (Mycobacterium smegmatis).